The primary structure comprises 711 residues: F-box only protein 34 (711 aa).

Disordered regions lie at residues 1–36 (MHLKPYWKLQKKEHPPEVSRETQRTPMNHQKAVNDE), 249–271 (SESYSAPGACEEPTERGNLEVGE), 337–372 (DTQVNPVGSVSVDCGPSRADRCSPKEDQAWDGASQD), and 494–529 (YSQLNESTTKESSEASQLEDAAGGDSASEEKSGSAE). Residues 10 to 23 (QKKEHPPEVSRETQ) are compositionally biased toward basic and acidic residues. Positions 354-364 (RADRCSPKEDQ) are enriched in basic and acidic residues. One can recognise an F-box domain in the interval 572 to 624 (QQYMAFLPHHIMVKIFRLLPTKSLVALKCTCCYFKFIIEYYNIRPADSRWVRD).

In terms of assembly, directly interacts with SKP1 and CUL1.

Its function is as follows. Substrate-recognition component of the SCF (SKP1-CUL1-F-box protein)-type E3 ubiquitin ligase complex. The chain is F-box only protein 34 (FBXO34) from Homo sapiens (Human).